Consider the following 396-residue polypeptide: MTEHNVRNFNINFGPQHPAAHGVLRLVLELDGEIVERVDPHIGLLHRGTEKLIEAKTYLQAIPYFDRLDYVAPMNQEHAFALAVERLTGTQVPIRGQLIRVLYSEIGRILSHLLNVTTQAMDVGALTPPLWGFEEREKLMVFYERACGARMHAAYFRPGGVHQDLPHQLVEDIGKWIDPFLKTVDDIDELLTGNRIFKQRNVDIGVVSLEDAWAWGFSGVMVRGSGAAWDLRRSQPYECYSDLEFDIPIGKNGDCFDRYLIRMIEMRESARIMRQCVDRLLGDAKVGPVSSLDGKIVPPKRGEMKRSMEALIHHFKLYTEGYHVPAGDVYAAVEAPKGEFGVYLVSDGTNKPYRCKIRAPGYAHLQAMDFLCRGHQLADVSAVLGSLDIVFGEVDR.

The protein belongs to the complex I 49 kDa subunit family. As to quaternary structure, NDH-1 is composed of 14 different subunits. Subunits NuoB, C, D, E, F, and G constitute the peripheral sector of the complex.

It is found in the cell inner membrane. The catalysed reaction is a quinone + NADH + 5 H(+)(in) = a quinol + NAD(+) + 4 H(+)(out). Functionally, NDH-1 shuttles electrons from NADH, via FMN and iron-sulfur (Fe-S) centers, to quinones in the respiratory chain. The immediate electron acceptor for the enzyme in this species is believed to be ubiquinone. Couples the redox reaction to proton translocation (for every two electrons transferred, four hydrogen ions are translocated across the cytoplasmic membrane), and thus conserves the redox energy in a proton gradient. The sequence is that of NADH-quinone oxidoreductase subunit D 1 from Sinorhizobium medicae (strain WSM419) (Ensifer medicae).